Consider the following 71-residue polypeptide: Cell division protein ZapB (71 aa).

Positions 5-67 form a coiled coil; that stretch reads LEVLEQLESK…RALLGKMDQM (63 aa).

It belongs to the ZapB family. In terms of assembly, homodimer. The ends of the coiled-coil dimer bind to each other, forming polymers. Interacts with FtsZ.

Its subcellular location is the cytoplasm. Its function is as follows. Non-essential, abundant cell division factor that is required for proper Z-ring formation. It is recruited early to the divisome by direct interaction with FtsZ, stimulating Z-ring assembly and thereby promoting cell division earlier in the cell cycle. Its recruitment to the Z-ring requires functional FtsA or ZipA. The polypeptide is Cell division protein ZapB (Aeromonas hydrophila subsp. hydrophila (strain ATCC 7966 / DSM 30187 / BCRC 13018 / CCUG 14551 / JCM 1027 / KCTC 2358 / NCIMB 9240 / NCTC 8049)).